The primary structure comprises 125 residues: Holo-[acyl-carrier-protein] synthase (125 aa).

Residues Asp-8 and Glu-56 each coordinate Mg(2+).

It belongs to the P-Pant transferase superfamily. AcpS family. The cofactor is Mg(2+).

It localises to the cytoplasm. The enzyme catalyses apo-[ACP] + CoA = holo-[ACP] + adenosine 3',5'-bisphosphate + H(+). In terms of biological role, transfers the 4'-phosphopantetheine moiety from coenzyme A to a Ser of acyl-carrier-protein. The sequence is that of Holo-[acyl-carrier-protein] synthase from Borrelia turicatae (strain 91E135).